Reading from the N-terminus, the 563-residue chain is Eukaryotic translation initiation factor 3 subunit D-1 (563 aa).

The interval 98–136 (VQKPPHQRGRFRNMRGRGGRGRNPRGGLNNHHHHGMTTL) is disordered. The segment covering 100 to 120 (KPPHQRGRFRNMRGRGGRGRN) has biased composition (basic residues). The segment at 291–305 (EFDLLTVNESSVEPP) is RNA gate.

The protein belongs to the eIF-3 subunit D family. As to quaternary structure, component of the eukaryotic translation initiation factor 3 (eIF-3) complex. The eIF-3 complex interacts with pix.

The protein localises to the cytoplasm. Its function is as follows. mRNA cap-binding component of the eukaryotic translation initiation factor 3 (eIF-3) complex, which is involved in protein synthesis of a specialized repertoire of mRNAs and, together with other initiation factors, stimulates binding of mRNA and methionyl-tRNAi to the 40S ribosome. The eIF-3 complex specifically targets and initiates translation of a subset of mRNAs involved in cell proliferation. In the eIF-3 complex, eif3d specifically recognizes and binds the 7-methylguanosine cap of a subset of mRNAs. The sequence is that of Eukaryotic translation initiation factor 3 subunit D-1 from Drosophila pseudoobscura pseudoobscura (Fruit fly).